The chain runs to 253 residues: uncharacterized protein (253 aa).

2 consecutive EamA domains span residues 1–97 and 116–237; these read MFFM…IYSL and FFWA…ISRL. Transmembrane regions (helical) follow at residues 2-22, 28-48, 53-73, 80-100, 101-121, 138-158, 162-182, and 214-234; these read FFMA…AKQL, IFLL…GLLY, ESAV…TLIL, TEVI…LNLG, IYFS…WALF, AVQL…QFYF, INFL…SFYL, and GVNV…GILI.

Belongs to the EamA transporter family.

The protein resides in the cell membrane. This is an uncharacterized protein from Acidianus ambivalens (Desulfurolobus ambivalens).